The following is a 418-amino-acid chain: ATP-dependent Clp protease ATP-binding subunit ClpX (418 aa).

Positions 1 to 54 constitute a ClpX-type ZB domain; that stretch reads MTRKDDESDQFFCSFCGKNQKEVKKLIAGPSVYICNECVSLCEEIIEDEDKESL. Zn(2+) contacts are provided by Cys13, Cys16, Cys35, and Cys38. 120–127 serves as a coordination point for ATP; sequence PTGCGKTL.

This sequence belongs to the ClpX chaperone family. Component of the ClpX-ClpP complex. Forms a hexameric ring that, in the presence of ATP, binds to fourteen ClpP subunits assembled into a disk-like structure with a central cavity, resembling the structure of eukaryotic proteasomes.

In terms of biological role, ATP-dependent specificity component of the Clp protease. It directs the protease to specific substrates. Can perform chaperone functions in the absence of ClpP. The sequence is that of ATP-dependent Clp protease ATP-binding subunit ClpX from Desulforapulum autotrophicum (strain ATCC 43914 / DSM 3382 / VKM B-1955 / HRM2) (Desulfobacterium autotrophicum).